A 218-amino-acid polypeptide reads, in one-letter code: Adenylate kinase (218 aa).

An ATP-binding site is contributed by 10–15 (GAGKGT). Residues 30 to 59 (STGDMLRAAVKAGTPLGIAAKKIMDEGGLV) are NMP. AMP contacts are provided by residues Thr31, Arg36, 57–59 (GLV), 85–88 (GFPR), and Gln92. The LID stretch occupies residues 122–159 (GRRVHPASGRTYHVKFNPPKVAGRDDVTGEELIQRDDD). ATP-binding positions include Arg123 and 132–133 (TY). Arg156 and Arg167 together coordinate AMP. Gly203 is a binding site for ATP.

This sequence belongs to the adenylate kinase family. Monomer.

Its subcellular location is the cytoplasm. The enzyme catalyses AMP + ATP = 2 ADP. The protein operates within purine metabolism; AMP biosynthesis via salvage pathway; AMP from ADP: step 1/1. Functionally, catalyzes the reversible transfer of the terminal phosphate group between ATP and AMP. Plays an important role in cellular energy homeostasis and in adenine nucleotide metabolism. The polypeptide is Adenylate kinase (Herminiimonas arsenicoxydans).